The sequence spans 369 residues: Histidinol-phosphate aminotransferase (369 aa).

Residues 1–39 (MSFGIDDLPVRDELRGKSPYGAPQLDVPVRLNTNENPYP) form a disordered region. Position 230 is an N6-(pyridoxal phosphate)lysine (Lys230).

Belongs to the class-II pyridoxal-phosphate-dependent aminotransferase family. Histidinol-phosphate aminotransferase subfamily. Homodimer. Requires pyridoxal 5'-phosphate as cofactor.

It carries out the reaction L-histidinol phosphate + 2-oxoglutarate = 3-(imidazol-4-yl)-2-oxopropyl phosphate + L-glutamate. Its pathway is amino-acid biosynthesis; L-histidine biosynthesis; L-histidine from 5-phospho-alpha-D-ribose 1-diphosphate: step 7/9. This chain is Histidinol-phosphate aminotransferase (hisC), found in Streptomyces avermitilis (strain ATCC 31267 / DSM 46492 / JCM 5070 / NBRC 14893 / NCIMB 12804 / NRRL 8165 / MA-4680).